The following is a 275-amino-acid chain: MQAVQQEIAQALKVQPPFADAAALEAEVARRVTFIKGCLANARLKTLVLGISGGVDSLTAALLAQRAINELRAETGDKAYTFIAVRLPYQVQHDEHDAQACLDVIKADEVHTVDIAPAVRALAAEVVELKNGSPTLVDFVVGNVKARTRMVAQYTIAGARAGLVIGTDHAAEAVMGFFTKFGDGACDLAPLSGLVKNQVRAIARSFGAPESLVEKVPTADLEDLEPGKPDEASHGVTYQQIDAFLHGQPVDQAAFDIIVATYRKTQHKRELPFAP.

50-57 (GISGGVDS) lines the ATP pocket. D56 contributes to the Mg(2+) binding site. R147 provides a ligand contact to deamido-NAD(+). ATP is bound at residue T167. E172 contributes to the Mg(2+) binding site. K180 and D187 together coordinate deamido-NAD(+). The ATP site is built by K196 and T218. 267-268 (HK) is a deamido-NAD(+) binding site.

This sequence belongs to the NAD synthetase family. In terms of assembly, homodimer.

It catalyses the reaction deamido-NAD(+) + NH4(+) + ATP = AMP + diphosphate + NAD(+) + H(+). It participates in cofactor biosynthesis; NAD(+) biosynthesis; NAD(+) from deamido-NAD(+) (ammonia route): step 1/1. Functionally, catalyzes the ATP-dependent amidation of deamido-NAD to form NAD. Uses ammonia as a nitrogen source. The sequence is that of NH(3)-dependent NAD(+) synthetase from Pseudomonas putida (strain GB-1).